The primary structure comprises 349 residues: Hydroxymethylglutaryl-CoA synthase (349 aa).

The (3S)-3-hydroxy-3-methylglutaryl-CoA site is built by D29 and A30. E81 (proton donor/acceptor) is an active-site residue. Residues C113 and T154 each coordinate (3S)-3-hydroxy-3-methylglutaryl-CoA. The active-site Acyl-thioester intermediate is C113. R202 is a CoA binding site. Residues T204 and H237 each contribute to the (3S)-3-hydroxy-3-methylglutaryl-CoA site. Residue H237 is the Proton donor/acceptor of the active site. K242 serves as a coordination point for CoA. Positions 246, 269, and 299 each coordinate (3S)-3-hydroxy-3-methylglutaryl-CoA.

It belongs to the thiolase-like superfamily. Archaeal HMG-CoA synthase family. As to quaternary structure, interacts with acetoacetyl-CoA thiolase that catalyzes the precedent step in the pathway and with a DUF35 protein. The acetoacetyl-CoA thiolase/HMG-CoA synthase complex channels the intermediate via a fused CoA-binding site, which allows for efficient coupling of the endergonic thiolase reaction with the exergonic HMGCS reaction.

It carries out the reaction acetoacetyl-CoA + acetyl-CoA + H2O = (3S)-3-hydroxy-3-methylglutaryl-CoA + CoA + H(+). The protein operates within metabolic intermediate biosynthesis; (R)-mevalonate biosynthesis; (R)-mevalonate from acetyl-CoA: step 2/3. Catalyzes the condensation of acetyl-CoA with acetoacetyl-CoA to form 3-hydroxy-3-methylglutaryl-CoA (HMG-CoA). Functions in the mevalonate (MVA) pathway leading to isopentenyl diphosphate (IPP), a key precursor for the biosynthesis of isoprenoid compounds that are building blocks of archaeal membrane lipids. The polypeptide is Hydroxymethylglutaryl-CoA synthase (Methanosarcina mazei (strain ATCC BAA-159 / DSM 3647 / Goe1 / Go1 / JCM 11833 / OCM 88) (Methanosarcina frisia)).